A 325-amino-acid chain; its full sequence is Tetraacyldisaccharide 4'-kinase (325 aa).

Position 53-60 (53-60 (SVGGNGKT)) interacts with ATP.

This sequence belongs to the LpxK family.

The enzyme catalyses a lipid A disaccharide + ATP = a lipid IVA + ADP + H(+). It participates in glycolipid biosynthesis; lipid IV(A) biosynthesis; lipid IV(A) from (3R)-3-hydroxytetradecanoyl-[acyl-carrier-protein] and UDP-N-acetyl-alpha-D-glucosamine: step 6/6. Its function is as follows. Transfers the gamma-phosphate of ATP to the 4'-position of a tetraacyldisaccharide 1-phosphate intermediate (termed DS-1-P) to form tetraacyldisaccharide 1,4'-bis-phosphate (lipid IVA). The chain is Tetraacyldisaccharide 4'-kinase from Mannheimia succiniciproducens (strain KCTC 0769BP / MBEL55E).